A 235-amino-acid polypeptide reads, in one-letter code: 7-cyano-7-deazaguanine synthase (235 aa).

7–17 (CSGGLDSVSLA) is an ATP binding site. C185, C193, C196, and C199 together coordinate Zn(2+).

This sequence belongs to the QueC family. The cofactor is Zn(2+).

It catalyses the reaction 7-carboxy-7-deazaguanine + NH4(+) + ATP = 7-cyano-7-deazaguanine + ADP + phosphate + H2O + H(+). It functions in the pathway purine metabolism; 7-cyano-7-deazaguanine biosynthesis. Functionally, catalyzes the ATP-dependent conversion of 7-carboxy-7-deazaguanine (CDG) to 7-cyano-7-deazaguanine (preQ(0)). This chain is 7-cyano-7-deazaguanine synthase, found in Allorhizobium ampelinum (strain ATCC BAA-846 / DSM 112012 / S4) (Agrobacterium vitis (strain S4)).